We begin with the raw amino-acid sequence, 1717 residues long: Protein MON2 homolog (1717 aa).

The residue at position 2 (Ser2) is an N-acetylserine. Phosphoserine occurs at positions 205 and 537. The interval 511 to 538 is disordered; that stretch reads ETECQTTTEEGSSPTQSTEQQDLQSTSD. The span at 522–538 shows a compositional bias: polar residues; the sequence is SSPTQSTEQQDLQSTSD.

Belongs to the MON2 family. In terms of assembly, homooligomer. Heterotrimer with ATP9A and DOP1B; this interaction is retromer-independent. Interacts with SNX3.

Its subcellular location is the early endosome membrane. Its function is as follows. Plays a role in regulating membrane trafficking of cargo proteins. Together with ATP9A and DOP1B, regulates SNX3 retromer-mediated endosomal sorting of WLS away from lysosomal degradation. In Homo sapiens (Human), this protein is Protein MON2 homolog.